Reading from the N-terminus, the 710-residue chain is Integrator complex subunit 10 (710 aa).

A disordered region spans residues 366-393 (IHKKRKLAEGREKTMSSDDEDPSGKARS). Basic and acidic residues predominate over residues 372–381 (LAEGREKTMS).

It belongs to the Integrator subunit 10 family. Component of the Integrator complex, composed of core subunits INTS1, INTS2, INTS3, INTS4, INTS5, INTS6, INTS7, INTS8, INTS9/RC74, INTS10, INTS11/CPSF3L, INTS12, INTS13, INTS14 and INTS15. The core complex associates with protein phosphatase 2A subunits PPP2CA and PPP2R1A, to form the Integrator-PP2A (INTAC) complex. INTS10 is part of the tail subcomplex, composed of INTS10, INTS13, INTS14 and INTS15.

The protein resides in the nucleus. Functionally, component of the integrator complex, a multiprotein complex that terminates RNA polymerase II (Pol II) transcription in the promoter-proximal region of genes. The integrator complex provides a quality checkpoint during transcription elongation by driving premature transcription termination of transcripts that are unfavorably configured for transcriptional elongation: the complex terminates transcription by (1) catalyzing dephosphorylation of the C-terminal domain (CTD) of Pol II subunit POLR2A/RPB1 and SUPT5H/SPT5, (2) degrading the exiting nascent RNA transcript via endonuclease activity and (3) promoting the release of Pol II from bound DNA. The integrator complex is also involved in terminating the synthesis of non-coding Pol II transcripts, such as enhancer RNAs (eRNAs), small nuclear RNAs (snRNAs), telomerase RNAs and long non-coding RNAs (lncRNAs). This Gallus gallus (Chicken) protein is Integrator complex subunit 10 (INTS10).